A 514-amino-acid polypeptide reads, in one-letter code: Histidine ammonia-lyase (514 aa).

A cross-link (5-imidazolinone (Ala-Gly)) is located at residues 143–145; it reads ASG. 2,3-didehydroalanine (Ser) is present on serine 144.

Belongs to the PAL/histidase family. Post-translationally, contains an active site 4-methylidene-imidazol-5-one (MIO), which is formed autocatalytically by cyclization and dehydration of residues Ala-Ser-Gly.

It is found in the cytoplasm. The catalysed reaction is L-histidine = trans-urocanate + NH4(+). The protein operates within amino-acid degradation; L-histidine degradation into L-glutamate; N-formimidoyl-L-glutamate from L-histidine: step 1/3. This is Histidine ammonia-lyase from Photorhabdus laumondii subsp. laumondii (strain DSM 15139 / CIP 105565 / TT01) (Photorhabdus luminescens subsp. laumondii).